The sequence spans 338 residues: Ketol-acid reductoisomerase (NADP(+)) (338 aa).

The KARI N-terminal Rossmann domain occupies 1–181 (MKVYYDKDAD…GGTRGGVIET (181 aa)). Residues 24 to 27 (YGSQ), R47, and S52 each bind NADP(+). Residue H107 is part of the active site. G133 lines the NADP(+) pocket. The KARI C-terminal knotted domain occupies 182 to 327 (TFKEETETDL…AKLRDMMPWI (146 aa)). The Mg(2+) site is built by D190, E194, E226, and E230. S251 is a substrate binding site.

It belongs to the ketol-acid reductoisomerase family. The cofactor is Mg(2+).

It catalyses the reaction (2R)-2,3-dihydroxy-3-methylbutanoate + NADP(+) = (2S)-2-acetolactate + NADPH + H(+). The catalysed reaction is (2R,3R)-2,3-dihydroxy-3-methylpentanoate + NADP(+) = (S)-2-ethyl-2-hydroxy-3-oxobutanoate + NADPH + H(+). Its pathway is amino-acid biosynthesis; L-isoleucine biosynthesis; L-isoleucine from 2-oxobutanoate: step 2/4. The protein operates within amino-acid biosynthesis; L-valine biosynthesis; L-valine from pyruvate: step 2/4. Functionally, involved in the biosynthesis of branched-chain amino acids (BCAA). Catalyzes an alkyl-migration followed by a ketol-acid reduction of (S)-2-acetolactate (S2AL) to yield (R)-2,3-dihydroxy-isovalerate. In the isomerase reaction, S2AL is rearranged via a Mg-dependent methyl migration to produce 3-hydroxy-3-methyl-2-ketobutyrate (HMKB). In the reductase reaction, this 2-ketoacid undergoes a metal-dependent reduction by NADPH to yield (R)-2,3-dihydroxy-isovalerate. The chain is Ketol-acid reductoisomerase (NADP(+)) from Nitrosomonas europaea (strain ATCC 19718 / CIP 103999 / KCTC 2705 / NBRC 14298).